Reading from the N-terminus, the 168-residue chain is Nicotinamide-nucleotide adenylyltransferase (168 aa).

The protein belongs to the archaeal NMN adenylyltransferase family.

It is found in the cytoplasm. It catalyses the reaction beta-nicotinamide D-ribonucleotide + ATP + H(+) = diphosphate + NAD(+). Its pathway is cofactor biosynthesis; NAD(+) biosynthesis; NAD(+) from nicotinamide D-ribonucleotide: step 1/1. This Methanocorpusculum labreanum (strain ATCC 43576 / DSM 4855 / Z) protein is Nicotinamide-nucleotide adenylyltransferase.